A 165-amino-acid polypeptide reads, in one-letter code: 2-C-methyl-D-erythritol 2,4-cyclodiphosphate synthase (165 aa).

Positions 11 and 13 each coordinate a divalent metal cation. 4-CDP-2-C-methyl-D-erythritol 2-phosphate contacts are provided by residues 11-13 and 40-41; these read DVH and HS. Residue H48 coordinates a divalent metal cation. 4-CDP-2-C-methyl-D-erythritol 2-phosphate-binding positions include 62-64, 67-71, 137-140, F144, and R147; these read DIG, FPDTD, and TTSE.

Belongs to the IspF family. As to quaternary structure, homotrimer. It depends on a divalent metal cation as a cofactor.

It catalyses the reaction 4-CDP-2-C-methyl-D-erythritol 2-phosphate = 2-C-methyl-D-erythritol 2,4-cyclic diphosphate + CMP. It participates in isoprenoid biosynthesis; isopentenyl diphosphate biosynthesis via DXP pathway; isopentenyl diphosphate from 1-deoxy-D-xylulose 5-phosphate: step 4/6. Involved in the biosynthesis of isopentenyl diphosphate (IPP) and dimethylallyl diphosphate (DMAPP), two major building blocks of isoprenoid compounds. Catalyzes the conversion of 4-diphosphocytidyl-2-C-methyl-D-erythritol 2-phosphate (CDP-ME2P) to 2-C-methyl-D-erythritol 2,4-cyclodiphosphate (ME-CPP) with a corresponding release of cytidine 5-monophosphate (CMP). The sequence is that of 2-C-methyl-D-erythritol 2,4-cyclodiphosphate synthase from Rubrobacter xylanophilus (strain DSM 9941 / JCM 11954 / NBRC 16129 / PRD-1).